Reading from the N-terminus, the 810-residue chain is Cation/H(+) antiporter 18 (810 aa).

12 consecutive transmembrane segments (helical) span residues 29 to 49, 59 to 76, 91 to 111, 126 to 146, 157 to 177, 193 to 213, 223 to 243, 277 to 297, 314 to 334, 343 to 363, 374 to 394, and 406 to 426; these read FALPLAILQIVIVIVLTRVLA, RVIAEVIGGIMLGPSLLG, LTVLETLANLGLLFFLFLAGL, LGIALAGITLPFALGIGSSFV, STAFLVFMGVALSITAFPVLA, LAMSAAAVNDVAAWILLALAI, LVSLWVFLSGCAFVIGASFII, FITDAIGIHSMFGAFVVGVLI, LVSGLFLPLYFVASGLKTNVA, GLLVLVTATACFGKILGTLGV, AITLGFLMNTKGLVELIVLNI, and FAIMVLMALFTTFITTPVVMA. Ser804 is subject to Phosphoserine.

Belongs to the monovalent cation:proton antiporter 2 (CPA2) transporter (TC 2.A.37) family. CHX (TC 2.A.37.4) subfamily. As to expression, expressed in roots.

It is found in the membrane. Its function is as follows. May operate as a cation/H(+) antiporter. The protein is Cation/H(+) antiporter 18 (CHX18) of Arabidopsis thaliana (Mouse-ear cress).